The primary structure comprises 100 residues: Large ribosomal subunit protein eL31 (100 aa).

The protein belongs to the eukaryotic ribosomal protein eL31 family.

The polypeptide is Large ribosomal subunit protein eL31 (Hyperthermus butylicus (strain DSM 5456 / JCM 9403 / PLM1-5)).